Here is a 545-residue protein sequence, read N- to C-terminus: T-complex protein 1 subunit gamma (545 aa).

N-acetylmethionine is present on M1. The segment at 1-24 is disordered; it reads MMGHRPVLVLSQNTKRESGRKVQS. The residue at position 11 (S11) is a Phosphoserine. K15 is covalently cross-linked (Glycyl lysine isopeptide (Lys-Gly) (interchain with G-Cter in SUMO2)). G42 is an ADP binding site. An ATP-binding site is contributed by G42. D93 is a Mg(2+) binding site. G94, T95, T96, S97, T162, and K163 together coordinate ADP. ATP contacts are provided by G94, T95, and T96. S170 carries the phosphoserine modification. K222 carries the N6-acetyllysine modification. Phosphoserine is present on residues S243 and S244. Phosphotyrosine is present on Y247. Glycyl lysine isopeptide (Lys-Gly) (interchain with G-Cter in SUMO2) cross-links involve residues K248 and K249. A Phosphoserine modification is found at S252. A disulfide bridge connects residues C366 and C372. A Glycyl lysine isopeptide (Lys-Gly) (interchain with G-Cter in SUMO2) cross-link involves residue K381. Residue G411 participates in ADP binding. Position 411 (G411) interacts with ATP. T430 and T459 each carry phosphothreonine. 4 residues coordinate ADP: G482, E483, E497, and K502. Position 482 (G482) interacts with ATP. E497 contacts ATP. The interval 526-545 is disordered; it reads HKKKGDDQSRQGGAPDAGQE.

The protein belongs to the TCP-1 chaperonin family. Component of the chaperonin-containing T-complex (TRiC), a hexadecamer composed of two identical back-to-back stacked rings enclosing a protein folding chamber. Each ring is made up of eight different subunits: TCP1/CCT1, CCT2, CCT3, CCT4, CCT5, CCT6A/CCT6, CCT7, CCT8. Interacts with PACRG. Interacts with DNAAF4. Interacts with DLEC1.

The protein localises to the cytoplasm. It carries out the reaction ATP + H2O = ADP + phosphate + H(+). In terms of biological role, component of the chaperonin-containing T-complex (TRiC), a molecular chaperone complex that assists the folding of actin, tubulin and other proteins upon ATP hydrolysis. The TRiC complex mediates the folding of WRAP53/TCAB1, thereby regulating telomere maintenance. As part of the TRiC complex may play a role in the assembly of BBSome, a complex involved in ciliogenesis regulating transports vesicles to the cilia. This Bos taurus (Bovine) protein is T-complex protein 1 subunit gamma (CCT3).